The following is a 78-amino-acid chain: Acyl carrier protein (78 aa).

One can recognise a Carrier domain in the interval 1–76; sequence MAIHPKVKDI…DVASYLEKKG (76 aa). The residue at position 36 (Ser36) is an O-(pantetheine 4'-phosphoryl)serine.

This sequence belongs to the acyl carrier protein (ACP) family. In terms of processing, 4'-phosphopantetheine is transferred from CoA to a specific serine of apo-ACP by AcpS. This modification is essential for activity because fatty acids are bound in thioester linkage to the sulfhydryl of the prosthetic group.

Its subcellular location is the cytoplasm. It functions in the pathway lipid metabolism; fatty acid biosynthesis. In terms of biological role, carrier of the growing fatty acid chain in fatty acid biosynthesis. This Bdellovibrio bacteriovorus (strain ATCC 15356 / DSM 50701 / NCIMB 9529 / HD100) protein is Acyl carrier protein.